The chain runs to 493 residues: Ketol-acid reductoisomerase (NADP(+)) (493 aa).

The 195-residue stretch at 14-208 (LDQLGRCRFM…GGHRAGVLES (195 aa)) folds into the KARI N-terminal Rossmann domain. Residues 45–48 (CGAQ), Arg-68, Arg-76, Ser-78, and 108–110 (DKQ) each bind NADP(+). Residue His-132 is part of the active site. Residue Gly-158 participates in NADP(+) binding. KARI C-terminal knotted domains follow at residues 209 to 345 (SFVA…APKG) and 346 to 486 (ENIK…MTDM). Residues Asp-217, Glu-221, Glu-390, and Glu-394 each contribute to the Mg(2+) site. Substrate is bound at residue Ser-415.

The protein belongs to the ketol-acid reductoisomerase family. Mg(2+) serves as cofactor.

It catalyses the reaction (2R)-2,3-dihydroxy-3-methylbutanoate + NADP(+) = (2S)-2-acetolactate + NADPH + H(+). The enzyme catalyses (2R,3R)-2,3-dihydroxy-3-methylpentanoate + NADP(+) = (S)-2-ethyl-2-hydroxy-3-oxobutanoate + NADPH + H(+). Its pathway is amino-acid biosynthesis; L-isoleucine biosynthesis; L-isoleucine from 2-oxobutanoate: step 2/4. The protein operates within amino-acid biosynthesis; L-valine biosynthesis; L-valine from pyruvate: step 2/4. Its function is as follows. Involved in the biosynthesis of branched-chain amino acids (BCAA). Catalyzes an alkyl-migration followed by a ketol-acid reduction of (S)-2-acetolactate (S2AL) to yield (R)-2,3-dihydroxy-isovalerate. In the isomerase reaction, S2AL is rearranged via a Mg-dependent methyl migration to produce 3-hydroxy-3-methyl-2-ketobutyrate (HMKB). In the reductase reaction, this 2-ketoacid undergoes a metal-dependent reduction by NADPH to yield (R)-2,3-dihydroxy-isovalerate. The chain is Ketol-acid reductoisomerase (NADP(+)) from Histophilus somni (strain 129Pt) (Haemophilus somnus).